The following is a 228-amino-acid chain: Phosphoglycolate phosphatase (228 aa).

The active-site Nucleophile is the D9. Residues D9 and D11 each coordinate Mg(2+). K151 is a binding site for substrate. Residues D174 and D178 each coordinate Mg(2+).

Belongs to the archaeal SPP-like hydrolase family. The cofactor is Mg(2+).

It catalyses the reaction 2-phosphoglycolate + H2O = glycolate + phosphate. Catalyzes the dephosphorylation of 2-phosphoglycolate. The sequence is that of Phosphoglycolate phosphatase from Pyrobaculum neutrophilum (strain DSM 2338 / JCM 9278 / NBRC 100436 / V24Sta) (Thermoproteus neutrophilus).